We begin with the raw amino-acid sequence, 241 residues long: Tumor necrosis factor receptor superfamily member grnd (241 aa).

An N-terminal signal peptide occupies residues 1 to 27 (MSVRKLSALSLSIGGVPLIPSVSLVAA). The Extracellular portion of the chain corresponds to 28–98 (ANGESRDCHG…EMLDIQNTQQ (71 aa)). Intrachain disulfides connect Cys-35–Cys-47, Cys-40–Cys-54, Cys-57–Cys-77, and Cys-61–Cys-73. N-linked (GlcNAc...) asparagine glycosylation occurs at Asn-63. A helical transmembrane segment spans residues 99–119 (LILLLLTILLVLIALRCAFQF). Over 120–241 (LRWLIGNRCF…PSAATIPVAF (122 aa)) the chain is Cytoplasmic.

As to quaternary structure, interacts (via extracellular cysteine-rich domain) with egr (via secreted TNF-homology soluble form); forms heterohexamers when 3 copies associate with egr trimers. Interacts with Traf6/TRAF2 and veli (via PDZ domain). Post-translationally, N-glycosylated on Asn-63. Glycosylation regulates ligand binding, specifically reducing affinity for the TNF egr, thereby inhibiting activation of JNK signaling. In terms of tissue distribution, expressed in the adult midgut; under normal conditions expressed at lower levels than the other TNF receptor wgn.

Its subcellular location is the apical cell membrane. It localises to the cytoplasmic vesicle membrane. Functionally, acts as a receptor for TNF-cytokine egr. Plays a role in activation of JNK signaling and is required for egr-induced apoptosis, including in wing imaginal discs during development. May also play an egr-independent role in cell proliferation. TNF receptor involved in triggering JNK-dependent proliferation of the enteroblast-enterocyte lineage in response to stress-induced release of egr by intestinal stem cells and enteroblasts. Involved in regulation of insulin production in response to dietary protein shortage keeping systemic growth in check. Activation in brain insulin producing cells through binding of egr released into the hemolymph in response to dietary amino acid shortage, results in JNK-dependent inhibition of insulin production. The sequence is that of Tumor necrosis factor receptor superfamily member grnd from Drosophila melanogaster (Fruit fly).